A 404-amino-acid polypeptide reads, in one-letter code: Probable protein phosphatase 2C 30 (404 aa).

Residues 42–52 (AERGAEEETSG) show a composition bias toward basic and acidic residues. The segment at 42–72 (AERGAEEETSGKRRRLDGGGGEASTDEEDRE) is disordered. One can recognise a PPM-type phosphatase domain in the interval 77 to 399 (RYGFTSVCGR…DNVSVVVVNL (323 aa)). Mn(2+)-binding residues include Asp111, Gly112, and Asp298. The disordered stretch occupies residues 321 to 369 (GRRERNRSSPTSNLSPRQSSSSGDEAPNDGAPSAAAGSESDEESAAEED). Polar residues predominate over residues 330–343 (PTSNLSPRQSSSSG). Asp390 is a binding site for Mn(2+).

This sequence belongs to the PP2C family. Interacts with PYL5 and SAPK2. Binding to PYL5 is dependent on the presence of abscisic acid (ABA). Interacts with PYL3, PYL5 and PYL9. Binding to PYL5 and PYL9 is dependent on the presence of ABA. Mg(2+) is required as a cofactor. It depends on Mn(2+) as a cofactor.

It localises to the nucleus. It catalyses the reaction O-phospho-L-seryl-[protein] + H2O = L-seryl-[protein] + phosphate. The enzyme catalyses O-phospho-L-threonyl-[protein] + H2O = L-threonyl-[protein] + phosphate. Functionally, together with ABI5, PYL5 and SAPK2, is part of an abscisic acid (ABA) signaling unit that modulates seed germination and early seedling growth. In Oryza sativa subsp. japonica (Rice), this protein is Probable protein phosphatase 2C 30.